The sequence spans 23 residues: Phospholipase A2 crotoxin basic chain 3 (23 aa).

Ca(2+) serves as cofactor. In terms of processing, contains 7 disulfide bonds. In terms of tissue distribution, expressed by the venom gland.

The protein resides in the secreted. It catalyses the reaction a 1,2-diacyl-sn-glycero-3-phosphocholine + H2O = a 1-acyl-sn-glycero-3-phosphocholine + a fatty acid + H(+). Functionally, snake venom phospholipase A2 (PLA2) that shows presynaptic neurotoxicity. PLA2 catalyzes the calcium-dependent hydrolysis of the 2-acyl groups in 3-sn-phosphoglycerides. The polypeptide is Phospholipase A2 crotoxin basic chain 3 (Crotalus durissus terrificus (South American rattlesnake)).